Consider the following 240-residue polypeptide: Glutathione S-transferase theta-1 (240 aa).

The 81-residue stretch at 2 to 82 (VLELYLDLLS…YLAHKYKVPD (81 aa)) folds into the GST N-terminal domain. Glutathione is bound by residues His40, 53-54 (KV), and 66-67 (ES). Positions 88–223 (DLQARARVDE…ILKVRDCPPA (136 aa)) constitute a GST C-terminal domain.

This sequence belongs to the GST superfamily. Theta family. In terms of assembly, homodimer. In liver, highest expression found in central vein limiting plate hepatocytes. In lung, expressed mainly in club cells of the bronchiolar epithelium and, at low levels, in type II alveolar cells.

The protein resides in the cytoplasm. The enzyme catalyses RX + glutathione = an S-substituted glutathione + a halide anion + H(+). Functionally, conjugation of reduced glutathione to a wide number of exogenous and endogenous hydrophobic electrophiles. Also binds steroids, bilirubin, carcinogens and numerous organic anions. Has dichloromethane dehalogenase activity. The protein is Glutathione S-transferase theta-1 (Gstt1) of Rattus norvegicus (Rat).